A 609-amino-acid chain; its full sequence is UvrABC system protein C (609 aa).

The region spanning 16 to 94 (HLPGVYRHLD…IKSLRPRYNI (79 aa)) is the GIY-YIG domain. One can recognise a UVR domain in the interval 203-238 (REVMDEIEARMLQASTELRFEEAAVLRDQMGSLSKV).

This sequence belongs to the UvrC family. As to quaternary structure, interacts with UvrB in an incision complex.

Its subcellular location is the cytoplasm. Its function is as follows. The UvrABC repair system catalyzes the recognition and processing of DNA lesions. UvrC both incises the 5' and 3' sides of the lesion. The N-terminal half is responsible for the 3' incision and the C-terminal half is responsible for the 5' incision. The polypeptide is UvrABC system protein C (Bordetella pertussis (strain Tohama I / ATCC BAA-589 / NCTC 13251)).